The sequence spans 355 residues: MTANINKLARKNIQKLNPYQSARRIGGKGDTWLNANESPISVPFKGKVKVFNRYPECQPNNLLSSYANYVGLLNNQILVTRGADEGIELLIKAFCEPGKDAIIYCPPTYDMYAINAKIANVEIKEIPTFKNTWKIDLLNIRSNLNKVKLIYICNPNNPTGNIVSQEDLKSLLKVTLGQSLVIIDEAYIEFSPKNSMVNYLKTFPNLIILRTLSKAFALAGIRCGFTLAQKEVIDILHKVISPYPISTLIADIAVQSLEKKAIDDMKNRVLKLNMNRIWLIDELKKISCVKKVFDSHANYILVEFYMFKKIFQSLWQKGIILRNQNHKNNLKNCLRISIGSKSECMRLVQELKNFI.

The residue at position 214 (Lys-214) is an N6-(pyridoxal phosphate)lysine.

Belongs to the class-II pyridoxal-phosphate-dependent aminotransferase family. Histidinol-phosphate aminotransferase subfamily. In terms of assembly, homodimer. The cofactor is pyridoxal 5'-phosphate.

It carries out the reaction L-histidinol phosphate + 2-oxoglutarate = 3-(imidazol-4-yl)-2-oxopropyl phosphate + L-glutamate. It functions in the pathway amino-acid biosynthesis; L-histidine biosynthesis; L-histidine from 5-phospho-alpha-D-ribose 1-diphosphate: step 7/9. The chain is Histidinol-phosphate aminotransferase (hisC) from Buchnera aphidicola subsp. Schizaphis graminum (strain Sg).